Here is a 698-residue protein sequence, read N- to C-terminus: SPX domain-containing membrane protein OsI_21475 (698 aa).

Positions 2 to 145 (VNFGKKLMAD…GYRFTDYYVT (144 aa)) constitute an SPX domain. Helical transmembrane passes span 248 to 268 (FMSL…TYII), 279 to 299 (LGAA…AQIF), 316 to 336 (LIFS…AYDM), 339 to 357 (LTVL…ARAV), 376 to 396 (AGFV…AGLL), and 412 to 432 (LPGW…WISF). The segment at 467 to 495 (LLRDSSKKDEDDDEEVDDSEEGTHDSRKP) is disordered. A compositionally biased stretch (acidic residues) spans 476–486 (EDDDEEVDDSE). Helical transmembrane passes span 514-534 (LLIY…SSVI), 545-565 (AVAI…AVVG), 577-597 (LLMV…KITS), 605-625 (VVSA…NLSL), and 671-691 (LLNV…ASTF).

The protein belongs to the major facilitator superfamily.

It is found in the membrane. This Oryza sativa subsp. indica (Rice) protein is SPX domain-containing membrane protein OsI_21475.